Here is a 525-residue protein sequence, read N- to C-terminus: ATP synthase subunit alpha (525 aa).

169-176 (GDRQTGKT) is a binding site for ATP.

It belongs to the ATPase alpha/beta chains family. F-type ATPases have 2 components, CF(1) - the catalytic core - and CF(0) - the membrane proton channel. CF(1) has five subunits: alpha(3), beta(3), gamma(1), delta(1), epsilon(1). CF(0) has three main subunits: a(1), b(2) and c(9-12). The alpha and beta chains form an alternating ring which encloses part of the gamma chain. CF(1) is attached to CF(0) by a central stalk formed by the gamma and epsilon chains, while a peripheral stalk is formed by the delta and b chains.

The protein resides in the cell membrane. The enzyme catalyses ATP + H2O + 4 H(+)(in) = ADP + phosphate + 5 H(+)(out). Its function is as follows. Produces ATP from ADP in the presence of a proton gradient across the membrane. The alpha chain is a regulatory subunit. In Mesoplasma florum (strain ATCC 33453 / NBRC 100688 / NCTC 11704 / L1) (Acholeplasma florum), this protein is ATP synthase subunit alpha.